The chain runs to 206 residues: 2,3-bisphosphoglycerate-dependent phosphoglycerate mutase (206 aa).

Substrate-binding positions include 9 to 16 (RHGQSEWN), 22 to 23 (TG), Arg-61, 88 to 91 (ERNY), Lys-99, 115 to 116 (RR), and 159 to 160 (GN). His-10 functions as the Tele-phosphohistidine intermediate in the catalytic mechanism. Glu-88 functions as the Proton donor/acceptor in the catalytic mechanism.

This sequence belongs to the phosphoglycerate mutase family. BPG-dependent PGAM subfamily. Homodimer.

It carries out the reaction (2R)-2-phosphoglycerate = (2R)-3-phosphoglycerate. The protein operates within carbohydrate degradation; glycolysis; pyruvate from D-glyceraldehyde 3-phosphate: step 3/5. In terms of biological role, catalyzes the interconversion of 2-phosphoglycerate and 3-phosphoglycerate. This chain is 2,3-bisphosphoglycerate-dependent phosphoglycerate mutase, found in Bartonella henselae (strain ATCC 49882 / DSM 28221 / CCUG 30454 / Houston 1) (Rochalimaea henselae).